The sequence spans 176 residues: MFFDVLGYENSQSSIKINLDLLETNIINIFILIIILIYLGRKFLGNILINRQNRVITSIRESEERLEKSTIRLNEAKNQLSSAQIIINQIKQEAKNTAANVKESILKQGKTDIERLLLNTKNYIYNTELQIKKQIKQQIAALALQKVQSKLKDELDNNIQQKIIDQSLAMLTIRNK.

Residues 19–39 form a helical membrane-spanning segment; it reads LDLLETNIINIFILIIILIYL.

The protein belongs to the ATPase B chain family. As to quaternary structure, F-type ATPases have 2 components, F(1) - the catalytic core - and F(0) - the membrane proton channel. F(1) has five subunits: alpha(3), beta(3), gamma(1), delta(1), epsilon(1). F(0) has four main subunits: a(1), b(1), b'(1) and c(10-14). The alpha and beta chains form an alternating ring which encloses part of the gamma chain. F(1) is attached to F(0) by a central stalk formed by the gamma and epsilon chains, while a peripheral stalk is formed by the delta, b and b' chains.

It localises to the plastid. It is found in the chloroplast thylakoid membrane. In terms of biological role, f(1)F(0) ATP synthase produces ATP from ADP in the presence of a proton or sodium gradient. F-type ATPases consist of two structural domains, F(1) containing the extramembraneous catalytic core and F(0) containing the membrane proton channel, linked together by a central stalk and a peripheral stalk. During catalysis, ATP synthesis in the catalytic domain of F(1) is coupled via a rotary mechanism of the central stalk subunits to proton translocation. Its function is as follows. Component of the F(0) channel, it forms part of the peripheral stalk, linking F(1) to F(0). This chain is ATP synthase subunit b, chloroplastic, found in Galdieria sulphuraria (Red alga).